We begin with the raw amino-acid sequence, 547 residues long: uncharacterized protein (547 aa).

12 helical membrane-spanning segments follow: residues 33 to 53, 107 to 127, 145 to 165, 203 to 223, 231 to 251, 263 to 283, 298 to 318, 351 to 371, 397 to 417, 432 to 452, 470 to 490, and 499 to 519; these read PTFF…IMVI, PLIV…GVIF, TGLI…LSFA, VYIL…FYLA, FIAI…FLLV, VAGI…LIYL, LNKI…ASFF, TLLT…FGLL, TVII…VAFG, LDLA…VATG, IVSL…FQAI, and VFIW…IAFG.

It localises to the cell membrane. This is an uncharacterized protein from Mycoplasma genitalium (strain ATCC 33530 / DSM 19775 / NCTC 10195 / G37) (Mycoplasmoides genitalium).